We begin with the raw amino-acid sequence, 311 residues long: Metal-staphylopine import system permease protein CntB (311 aa).

6 consecutive transmembrane segments (helical) span residues 9 to 29 (IALM…LTYI), 105 to 125 (LTII…VVSA), 139 to 159 (VAFF…IIYV), 173 to 193 (GPES…GIYF), 237 to 257 (IFCM…YIFA), and 274 to 294 (FPVI…FNTL). The ABC transmembrane type-1 domain maps to 99–295 (FMNTLKLTII…VLFIVFNTLA (197 aa)).

This sequence belongs to the binding-protein-dependent transport system permease family. As to quaternary structure, the complex is composed of two ATP-binding proteins (CntD and CntF), two transmembrane proteins (CntB and CntC) and a solute-binding protein (CntA).

It is found in the cell membrane. Functionally, part of the ABC transporter complex CntABCDF (Opp1) involved in the uptake of metal in complex with the metallophore staphylopine (StP). May be involved in the import of a large array of divalent metals ions such as nickel, cobalt, zinc, copper and iron. Probably responsible for the translocation of the substrate across the membrane. The polypeptide is Metal-staphylopine import system permease protein CntB (Staphylococcus aureus (strain Mu50 / ATCC 700699)).